The primary structure comprises 122 residues: Double-headed protease inhibitor, submandibular gland (122 aa).

2 consecutive Kazal-like domains span residues 10 to 70 (GGRK…ECDI) and 71 to 121 (ECTQ…QCQS). 6 disulfide bridges follow: cysteine 16-cysteine 50, cysteine 28-cysteine 47, cysteine 36-cysteine 68, cysteine 72-cysteine 101, cysteine 79-cysteine 98, and cysteine 87-cysteine 119.

Its subcellular location is the secreted. Functionally, this inhibitor is composed of two homologous actively inhibiting halves: one which inhibits trypsin, the other which inhibits elastase. The sequence is that of Double-headed protease inhibitor, submandibular gland from Martes martes (European pine marten).